We begin with the raw amino-acid sequence, 107 residues long: Phosphoribosyl-ATP pyrophosphatase (107 aa).

Belongs to the PRA-PH family.

Its subcellular location is the cytoplasm. It catalyses the reaction 1-(5-phospho-beta-D-ribosyl)-ATP + H2O = 1-(5-phospho-beta-D-ribosyl)-5'-AMP + diphosphate + H(+). The protein operates within amino-acid biosynthesis; L-histidine biosynthesis; L-histidine from 5-phospho-alpha-D-ribose 1-diphosphate: step 2/9. The sequence is that of Phosphoribosyl-ATP pyrophosphatase from Methylobacterium nodulans (strain LMG 21967 / CNCM I-2342 / ORS 2060).